The chain runs to 317 residues: Acetyl-coenzyme A carboxylase carboxyl transferase subunit alpha (317 aa).

The region spanning 39-293 (KLEDKNRKLT…KDALGASLER (255 aa)) is the CoA carboxyltransferase C-terminal domain.

The protein belongs to the AccA family. As to quaternary structure, acetyl-CoA carboxylase is a heterohexamer composed of biotin carboxyl carrier protein (AccB), biotin carboxylase (AccC) and two subunits each of ACCase subunit alpha (AccA) and ACCase subunit beta (AccD).

The protein localises to the cytoplasm. It catalyses the reaction N(6)-carboxybiotinyl-L-lysyl-[protein] + acetyl-CoA = N(6)-biotinyl-L-lysyl-[protein] + malonyl-CoA. It participates in lipid metabolism; malonyl-CoA biosynthesis; malonyl-CoA from acetyl-CoA: step 1/1. Component of the acetyl coenzyme A carboxylase (ACC) complex. First, biotin carboxylase catalyzes the carboxylation of biotin on its carrier protein (BCCP) and then the CO(2) group is transferred by the carboxyltransferase to acetyl-CoA to form malonyl-CoA. This Chromohalobacter salexigens (strain ATCC BAA-138 / DSM 3043 / CIP 106854 / NCIMB 13768 / 1H11) protein is Acetyl-coenzyme A carboxylase carboxyl transferase subunit alpha.